The primary structure comprises 79 residues: Sec-independent protein translocase protein TatA (79 aa).

A helical membrane pass occupies residues methionine 1–glycine 21. The tract at residues aspartate 52–serine 79 is disordered. A compositionally biased stretch (polar residues) spans asparagine 56–serine 79.

It belongs to the TatA/E family. As to quaternary structure, the Tat system comprises two distinct complexes: a TatABC complex, containing multiple copies of TatA, TatB and TatC subunits, and a separate TatA complex, containing only TatA subunits. Substrates initially bind to the TatABC complex, which probably triggers association of the separate TatA complex to form the active translocon.

Its subcellular location is the cell inner membrane. Its function is as follows. Part of the twin-arginine translocation (Tat) system that transports large folded proteins containing a characteristic twin-arginine motif in their signal peptide across membranes. TatA could form the protein-conducting channel of the Tat system. The sequence is that of Sec-independent protein translocase protein TatA from Bdellovibrio bacteriovorus (strain ATCC 15356 / DSM 50701 / NCIMB 9529 / HD100).